The chain runs to 205 residues: Inosine triphosphate pyrophosphatase (205 aa).

20-25 provides a ligand contact to ITP; sequence TGNAKK. Glu48 contributes to the Mg(2+) binding site. ITP is bound by residues Lys60, 76–77, Lys93, 152–155, Lys175, and 180–181; these read DT, FGWD, and HR.

This sequence belongs to the HAM1 NTPase family. As to quaternary structure, homodimer. Mg(2+) serves as cofactor. Mn(2+) is required as a cofactor.

It localises to the cytoplasm. It carries out the reaction ITP + H2O = IMP + diphosphate + H(+). It catalyses the reaction dITP + H2O = dIMP + diphosphate + H(+). The enzyme catalyses XTP + H2O = XMP + diphosphate + H(+). Functionally, pyrophosphatase that hydrolyzes non-canonical purine nucleotides such as inosine triphosphate (ITP), deoxyinosine triphosphate (dITP) or xanthosine 5'-triphosphate (XTP) to their respective monophosphate derivatives. The enzyme does not distinguish between the deoxy- and ribose forms. Probably excludes non-canonical purines from RNA and DNA precursor pools, thus preventing their incorporation into RNA and DNA and avoiding chromosomal lesions. The protein is Inosine triphosphate pyrophosphatase of Oryza sativa subsp. japonica (Rice).